The primary structure comprises 197 residues: Phosphoheptose isomerase (197 aa).

One can recognise an SIS domain in the interval Met34–Pro192. Substrate-binding positions include Asn49–Gly51, Gln62, Asn91–Asp92, Ser122, and His172. Gln62 serves as a coordination point for Zn(2+). 2 residues coordinate Zn(2+): His172 and His180.

The protein belongs to the SIS family. GmhA subfamily. As to quaternary structure, homotetramer. The cofactor is Zn(2+).

It is found in the cytoplasm. The catalysed reaction is 2 D-sedoheptulose 7-phosphate = D-glycero-alpha-D-manno-heptose 7-phosphate + D-glycero-beta-D-manno-heptose 7-phosphate. The protein operates within carbohydrate biosynthesis; D-glycero-D-manno-heptose 7-phosphate biosynthesis; D-glycero-alpha-D-manno-heptose 7-phosphate and D-glycero-beta-D-manno-heptose 7-phosphate from sedoheptulose 7-phosphate: step 1/1. Catalyzes the isomerization of sedoheptulose 7-phosphate in D-glycero-D-manno-heptose 7-phosphate. This Pseudoalteromonas atlantica (strain T6c / ATCC BAA-1087) protein is Phosphoheptose isomerase.